Here is a 286-residue protein sequence, read N- to C-terminus: UDP-3-O-acyl-N-acetylglucosamine deacetylase (286 aa).

Zn(2+) contacts are provided by His81, His240, and Asp244. His266 serves as the catalytic Proton donor.

Belongs to the LpxC family. Zn(2+) serves as cofactor.

It carries out the reaction a UDP-3-O-[(3R)-3-hydroxyacyl]-N-acetyl-alpha-D-glucosamine + H2O = a UDP-3-O-[(3R)-3-hydroxyacyl]-alpha-D-glucosamine + acetate. The protein operates within glycolipid biosynthesis; lipid IV(A) biosynthesis; lipid IV(A) from (3R)-3-hydroxytetradecanoyl-[acyl-carrier-protein] and UDP-N-acetyl-alpha-D-glucosamine: step 2/6. Its function is as follows. Catalyzes the hydrolysis of UDP-3-O-myristoyl-N-acetylglucosamine to form UDP-3-O-myristoylglucosamine and acetate, the committed step in lipid A biosynthesis. The sequence is that of UDP-3-O-acyl-N-acetylglucosamine deacetylase from Francisella tularensis subsp. tularensis (strain FSC 198).